The sequence spans 808 residues: MANAERMITRVHSQRERLNETLVSERNEVLALLSRVEAKGKGILQQNQIIAEFEALPEQTRKKLEGGPFFDLLKSTQEAIVLPPWVALAVRPRPGVWEYLRVNLHALVVEELQPAEFLHFKEELVDGVKNGNFTLELDFEPFNASIPRPTLHKYIGNGVDFLNRHLSAKLFHDKESLLPLLKFLRLHSHQGKNLMLSEKIQNLNTLQHTLRKAEEYLAELKSETLYEEFEAKFEEIGLERGWGDNAERVLDMIRLLLDLLEAPDPCTLETFLGRVPMVFNVVILSPHGYFAQDNVLGYPDTGGQVVYILDQVRALEIEMLQRIKQQGLNIKPRILILTRLLPDAVGTTCGERLERVYDSEYCDILRVPFRTEKGIVRKWISRFEVWPYLETYTEDAAVELSKELNGKPDLIIGNYSDGNLVASLLAHKLGVTQCTIAHALEKTKYPDSDIYWKKLDDKYHFSCQFTADIFAMNHTDFIITSTFQEIAGSKETVGQYESHTAFTLPGLYRVVHGIDVFDPKFNIVSPGADMSIYFPYTEEKRRLTKFHSEIEELLYSDVENKEHLCVLKDKKKPILFTMARLDRVKNLSGLVEWYGKNTRLRELANLVVVGGDRRKESKDNEEKAEMKKMYDLIEEYKLNGQFRWISSQMDRVRNGELYRYICDTKGAFVQPALYEAFGLTVVEAMTCGLPTFATCKGGPAEIIVHGKSGFHIDPYHGDQAADTLADFFTKCKEDPSHWDEISKGGLQRIEEKYTWQIYSQRLLTLTGVYGFWKHVSNLDRLEARRYLEMFYALKYRPLAQAVPLAQDD.

The interval 277 to 754 (MVFNVVILSP…GLQRIEEKYT (478 aa)) is GT-B glycosyltransferase.

Belongs to the glycosyltransferase 1 family. Plant sucrose synthase subfamily. In terms of assembly, homotetramer. As to expression, expressed in the phloem of leaves and in roots. Detected in the whole plant but more precisely confined to the vasculature in cotyledons, mature leaves and siliques.

It catalyses the reaction an NDP-alpha-D-glucose + D-fructose = a ribonucleoside 5'-diphosphate + sucrose + H(+). In terms of biological role, sucrose-cleaving enzyme that provides UDP-glucose and fructose for various metabolic pathways. In Arabidopsis thaliana (Mouse-ear cress), this protein is Sucrose synthase 1 (SUS1).